A 452-amino-acid polypeptide reads, in one-letter code: Cobyrinate a,c-diamide synthase (452 aa).

Residues 244 to 437 (KIAYAYDEAF…VHINLYTYKE (194 aa)) form the GATase cobBQ-type domain. Catalysis depends on Cys327, which acts as the Nucleophile.

The protein belongs to the CobB/CbiA family. The cofactor is Mg(2+).

The enzyme catalyses cob(II)yrinate + 2 L-glutamine + 2 ATP + 2 H2O = cob(II)yrinate a,c diamide + 2 L-glutamate + 2 ADP + 2 phosphate + 2 H(+). It functions in the pathway cofactor biosynthesis; adenosylcobalamin biosynthesis; cob(II)yrinate a,c-diamide from sirohydrochlorin (anaerobic route): step 10/10. Its function is as follows. Catalyzes the ATP-dependent amidation of the two carboxylate groups at positions a and c of cobyrinate, using either L-glutamine or ammonia as the nitrogen source. In Caldanaerobacter subterraneus subsp. tengcongensis (strain DSM 15242 / JCM 11007 / NBRC 100824 / MB4) (Thermoanaerobacter tengcongensis), this protein is Cobyrinate a,c-diamide synthase.